The sequence spans 407 residues: Protein phosphatase methylesterase 1 (407 aa).

The disordered stretch occupies residues 1-53 (MSDLQKSFAKSKLAKLPPEPPPIPESVADEDDDSGSSTETVTPSPVKQLFARP). Active-site residues include Ser-185, Asp-211, and His-342. The span at 388 to 401 (GAGVPLGKAEGGTT) shows a compositional bias: gly residues. The tract at residues 388-407 (GAGVPLGKAEGGTTGSFKRS) is disordered.

The protein belongs to the AB hydrolase superfamily.

The enzyme catalyses [phosphatase 2A protein]-C-terminal L-leucine methyl ester + H2O = [phosphatase 2A protein]-C-terminal L-leucine + methanol + H(+). Its function is as follows. Demethylates proteins that have been reversibly carboxymethylated. Demethylates the phosphatase PP2A catalytic subunit. The polypeptide is Protein phosphatase methylesterase 1 (ppe1) (Emericella nidulans (strain FGSC A4 / ATCC 38163 / CBS 112.46 / NRRL 194 / M139) (Aspergillus nidulans)).